Consider the following 323-residue polypeptide: MMGQNQTSISDFLLLGLPIQPEQQNLCYALFLAMYLTTLLGNLLIIVLIRLDSHLHTPVYLFLSNLSFSDLCFSSVTMPKLLQNMQNQDPSIPYADCLTQMYFFLYFSDLESFLLVAMAYDRYVAICFPMHYTAICFLLHYTAIMSPMLCLSVVALSWVLTTFHAMLHTLLMARLCFCADNVIPHFFCDMSALLKLACSDTRVNEWVIFIMGGLILVIPFLLILGSYARIVSSILKVPSSKGICKAFSTCGSHLSVVSLFYGTVIGLYLCPSANSSTLKDTVMAMMYTVVTPMLTPFIYSLRNRDMKGALERVICKRKNPFLL.

Residues 1–25 (MMGQNQTSISDFLLLGLPIQPEQQN) are Extracellular-facing. Residue asparagine 5 is glycosylated (N-linked (GlcNAc...) asparagine). A helical membrane pass occupies residues 26–49 (LCYALFLAMYLTTLLGNLLIIVLI). Topologically, residues 50–57 (RLDSHLHT) are cytoplasmic. The helical transmembrane segment at 58 to 79 (PVYLFLSNLSFSDLCFSSVTMP) threads the bilayer. The Extracellular segment spans residues 80 to 100 (KLLQNMQNQDPSIPYADCLTQ). Cysteine 97 and cysteine 198 are disulfide-bonded. A helical membrane pass occupies residues 101–120 (MYFFLYFSDLESFLLVAMAY). Topologically, residues 121–148 (DRYVAICFPMHYTAICFLLHYTAIMSPM) are cytoplasmic. Residues 149–167 (LCLSVVALSWVLTTFHAML) form a helical membrane-spanning segment. At 168 to 205 (HTLLMARLCFCADNVIPHFFCDMSALLKLACSDTRVNE) the chain is on the extracellular side. A helical transmembrane segment spans residues 206 to 228 (WVIFIMGGLILVIPFLLILGSYA). The Cytoplasmic segment spans residues 229-245 (RIVSSILKVPSSKGICK). The helical transmembrane segment at 246–269 (AFSTCGSHLSVVSLFYGTVIGLYL) threads the bilayer. The Extracellular portion of the chain corresponds to 270-281 (CPSANSSTLKDT). A glycan (N-linked (GlcNAc...) asparagine) is linked at asparagine 274. A helical transmembrane segment spans residues 282–301 (VMAMMYTVVTPMLTPFIYSL). Residues 302-323 (RNRDMKGALERVICKRKNPFLL) lie on the Cytoplasmic side of the membrane.

This sequence belongs to the G-protein coupled receptor 1 family.

Its subcellular location is the cell membrane. Odorant receptor. This Homo sapiens (Human) protein is Olfactory receptor 1E2 (OR1E2).